A 345-amino-acid polypeptide reads, in one-letter code: UDP-3-O-acylglucosamine N-acyltransferase (345 aa).

His241 acts as the Proton acceptor in catalysis.

This sequence belongs to the transferase hexapeptide repeat family. LpxD subfamily. As to quaternary structure, homotrimer.

It catalyses the reaction a UDP-3-O-[(3R)-3-hydroxyacyl]-alpha-D-glucosamine + a (3R)-hydroxyacyl-[ACP] = a UDP-2-N,3-O-bis[(3R)-3-hydroxyacyl]-alpha-D-glucosamine + holo-[ACP] + H(+). The protein operates within bacterial outer membrane biogenesis; LPS lipid A biosynthesis. In terms of biological role, catalyzes the N-acylation of UDP-3-O-acylglucosamine using 3-hydroxyacyl-ACP as the acyl donor. Is involved in the biosynthesis of lipid A, a phosphorylated glycolipid that anchors the lipopolysaccharide to the outer membrane of the cell. The polypeptide is UDP-3-O-acylglucosamine N-acyltransferase (Desulfotalea psychrophila (strain LSv54 / DSM 12343)).